A 61-amino-acid polypeptide reads, in one-letter code: Photosystem II reaction center X protein (61 aa).

Residues 26-46 (IGSFIAAALLIVVPATAFLIF) traverse the membrane as a helical segment.

This sequence belongs to the PsbX family. Type 2 subfamily. PSII consists of a core antenna complex that captures photons, and an electron transfer chain that converts photonic excitation into a charge separation. PSII forms dimeric complexes.

The protein localises to the cellular thylakoid membrane. Functionally, involved in the binding and/or turnover of quinones at the Q(B) site of Photosystem II. The polypeptide is Photosystem II reaction center X protein (Prochlorococcus marinus (strain AS9601)).